The following is a 401-amino-acid chain: Diphosphomevalonate decarboxylase (401 aa).

At A2 the chain carries N-acetylalanine. (R)-5-diphosphomevalonate contacts are provided by residues 24-27 (YWGK), R79, 157-162 (SGSACR), and T213. The disordered stretch occupies residues 382-401 (VLDDPHHHLLGPDGLPQRDL).

Belongs to the diphosphomevalonate decarboxylase family. Homodimer.

Its subcellular location is the cytoplasm. It catalyses the reaction (R)-5-diphosphomevalonate + ATP = isopentenyl diphosphate + ADP + phosphate + CO2. It participates in steroid biosynthesis; cholesterol biosynthesis. Functionally, catalyzes the ATP dependent decarboxylation of (R)-5-diphosphomevalonate to form isopentenyl diphosphate (IPP). Functions in the mevalonate (MVA) pathway leading to isopentenyl diphosphate (IPP), a key precursor for the biosynthesis of isoprenoids and sterol synthesis. The sequence is that of Diphosphomevalonate decarboxylase (Mvd) from Rattus norvegicus (Rat).